The chain runs to 469 residues: MSHNVITRFAPSPTGHLHLGGARTALFNWLYAKHNNGKFLLRIEDTDKKRSSKELIDSIINAMSWLKIPYDGEIVLQSKNISRHIEIANQLILNNKAYYCYCSEEEINKEKEEFSKKGLYYKHNCIWKNKNFTIDNLTRVIRLRSPTEGVTSFDDKVYGNITVSNTQLDDMVLLRSDNTPTYLLSVVVDDHDMNITHIIRGTDHLTNTARQLLIYNALEWNPPKFAHIPLIHDEDGNKLSKRHQAIGIHEYKNLGILPEAISNYLLRMGWSHEDDEIISMDQAIKWFSIKNIGQSPARLDNKKLEFLNNHYISLTEDEVILNMIIPIIEKKIGYMLNEVKKGYLLKGLYELKKRTKNLVNLANESLFYVEDVPISIDQEASAIIKDYKHVFSILYNNLSRISEKEWNNSILTSTIKNISQNLDIKISNIYHCLRASIVGRMNAPSIIEIMINLQQEECLKRIKYAQNIE.

Residues 11-21 (PSPTGHLHLGG) carry the 'HIGH' region motif. The short motif at 238–242 (KLSKR) is the 'KMSKS' region element. Residue K241 participates in ATP binding.

The protein belongs to the class-I aminoacyl-tRNA synthetase family. Glutamate--tRNA ligase type 1 subfamily. Monomer.

It is found in the cytoplasm. The catalysed reaction is tRNA(Glu) + L-glutamate + ATP = L-glutamyl-tRNA(Glu) + AMP + diphosphate. In terms of biological role, catalyzes the attachment of glutamate to tRNA(Glu) in a two-step reaction: glutamate is first activated by ATP to form Glu-AMP and then transferred to the acceptor end of tRNA(Glu). In Ehrlichia chaffeensis (strain ATCC CRL-10679 / Arkansas), this protein is Glutamate--tRNA ligase 2.